A 258-amino-acid polypeptide reads, in one-letter code: ATP synthase subunit a (258 aa).

The next 6 helical transmembrane spans lie at 30-50, 85-105, 122-142, 151-171, 198-218, and 230-250; these read SSYFMVLTTVLTIVLFMVAMS, FFPFVFTLFIFILVANMLGMF, LIVTVALAMLVWLTVIIYGVF, LFVPSGVPIFVLPLVVVIEII, FAGFVVTLAAAWGGFGYLAGI, and LEFLVAFLQAYVFAMLTCIYL.

Belongs to the ATPase A chain family. As to quaternary structure, F-type ATPases have 2 components, CF(1) - the catalytic core - and CF(0) - the membrane proton channel. CF(1) has five subunits: alpha(3), beta(3), gamma(1), delta(1), epsilon(1). CF(0) has three main subunits: a(1), b(2) and c(9-12). The alpha and beta chains form an alternating ring which encloses part of the gamma chain. CF(1) is attached to CF(0) by a central stalk formed by the gamma and epsilon chains, while a peripheral stalk is formed by the delta and b chains.

The protein resides in the cell inner membrane. Its function is as follows. Key component of the proton channel; it plays a direct role in the translocation of protons across the membrane. The sequence is that of ATP synthase subunit a from Maricaulis maris (strain MCS10) (Caulobacter maris).